Reading from the N-terminus, the 562-residue chain is Tissue-type plasminogen activator (562 aa).

The first 19 residues, 1 to 19, serve as a signal peptide directing secretion; that stretch reads MYALKRELWCVLLLCGAIC. Residues 20-32 constitute a propeptide that is removed on maturation; the sequence is TSPSQETHRRLRR. The propeptide at 33–35 is removed by plasmin; the sequence is GVR. The region spanning 39–81 is the Fibronectin type-I domain; sequence VTCRDEKTQMIYQQHQSWLRPLLRGNRVEHCWCNDGQTQCHSV. Cystine bridges form between C41/C71, C69/C78, C86/C97, C91/C108, C110/C119, C127/C208, C148/C190, C179/C203, C215/C296, C236/C278, C267/C291, C299/C430, C342/C358, C350/C419, C444/C519, C476/C492, and C509/C537. The tract at residues 42 to 52 is important for binding to annexin A2; sequence RDEKTQMIYQQ. Residues 82 to 120 form the EGF-like domain; the sequence is PVKSCSEPRCFNGGTCLQAIYFSDFVCQCPVGFIGRQCE. T96 is a glycosylation site (O-linked (Fuc) threonine). 2 consecutive Kringle domains span residues 126–208 and 214–296; these read TCYE…TPAC and ECYT…LPQC. N152 carries N-linked (GlcNAc...) asparagine glycosylation. In terms of domain architecture, Peptidase S1 spans 311–561; sequence IKGGLYADIT…YLNWIRDNTR (251 aa). Catalysis depends on charge relay system residues H357 and D406. N483 is a glycosylation site (N-linked (GlcNAc...) asparagine). Catalysis depends on S513, which acts as the Charge relay system.

The protein belongs to the peptidase S1 family. As to quaternary structure, heterodimer of chain A and chain B held by a disulfide bond. Binds to fibrin with high affinity. This interaction leads to an increase in the catalytic efficiency of the enzyme due to an increase in affinity for plasminogen. Similarly, binding to heparin increases the activation of plasminogen. Binds to annexin A2, cytokeratin-8, fibronectin and laminin. Binds to mannose receptor and the low-density lipoprotein receptor-related protein (LRP1); these proteins are involved in TPA clearance. Binds LRP1B; binding is followed by internalization and degradation. Forms heterodimer with SERPINA5. Interacts with SERPINE1. In complex with SERPINE1, interacts with SORL1. Post-translationally, the single chain, almost fully active enzyme, can be further processed into a two-chain fully active form by a cleavage after Arg-310 catalyzed by plasmin, tissue kallikrein or factor Xa.

The protein resides in the secreted. It localises to the extracellular space. The enzyme catalyses Specific cleavage of Arg-|-Val bond in plasminogen to form plasmin.. With respect to regulation, inhibited by SERPINA5. Inhibited by SERPINE1. Converts the abundant, but inactive, zymogen plasminogen to plasmin by hydrolyzing a single Arg-Val bond in plasminogen. By controlling plasmin-mediated proteolysis, it plays an important role in tissue remodeling and degradation, in cell migration and many other physiopathological events. During oocyte activation, plays a role in cortical granule reaction in the zona reaction, which contributes to the block to polyspermy. The chain is Tissue-type plasminogen activator (PLAT) from Sus scrofa (Pig).